The chain runs to 409 residues: Lysosome-associated membrane glycoprotein 1 (409 aa).

An N-terminal signal peptide occupies residues 1–25; it reads MAAPGGARRRPLLLLLFAGLVHGAS. Positions 26–187 are first lumenal domain; it reads AVFVVKNGNG…SNFSREETRC (162 aa). The Lumenal segment spans residues 26-374; it reads AVFVVKNGNG…EECQLDENSM (349 aa). N-linked (GlcNAc...) asparagine glycosylation is found at asparagine 34, asparagine 59, asparagine 72, asparagine 80, asparagine 103, asparagine 117, asparagine 126, asparagine 146, asparagine 161, and asparagine 179. Cysteine 38 and cysteine 76 are joined by a disulfide. Residues cysteine 151 and cysteine 187 are joined by a disulfide bond. The segment at 180 to 207 is disordered; that stretch reads FSREETRCEQDLPTPTTPPQPAPTPAPA. Residues 188–219 form a hinge region; that stretch reads EQDLPTPTTPPQPAPTPAPASPAVFRYNVSGS. A compositionally biased stretch (pro residues) spans 194-207; that stretch reads PTTPPQPAPTPAPA. N-linked (GlcNAc...) asparagine glycosylation is found at asparagine 215, asparagine 220, asparagine 241, asparagine 253, asparagine 260, asparagine 285, asparagine 299, and asparagine 314. Residues 220-374 are second lumenal domain; sequence NGTCLLASMG…EECQLDENSM (155 aa). Cysteine 223 and cysteine 261 are oxidised to a cystine. Cysteine 330 and cysteine 367 form a disulfide bridge. Residues 375 to 398 traverse the membrane as a helical segment; that stretch reads LIPIAVGGALAGLVLIVLLAYLIG. Residues 399 to 409 are Cytoplasmic-facing; the sequence is RKRSHAGYQTI.

Belongs to the LAMP family. Interacts with ABCB9; this interaction strongly stabilizes ABCB9 and protects ABCB9 against lysosomal degradation. Interacts with FURIN. Interacts with TMEM175; inhibiting the proton channel activity of TMEM175. In terms of processing, O- and N-glycosylated; some of the N-glycans attached to LAMP-1 are polylactosaminoglycans.

It is found in the lysosome membrane. The protein resides in the endosome membrane. The protein localises to the late endosome membrane. Its subcellular location is the cell membrane. It localises to the cytolytic granule membrane. Functionally, lysosomal membrane glycoprotein which plays an important role in lysosome biogenesis, lysosomal pH regulation, autophagy and cholesterol homeostasis. Acts as an important regulator of lysosomal lumen pH regulation by acting as a direct inhibitor of the proton channel TMEM175, facilitating lysosomal acidification for optimal hydrolase activity. Also plays an important role in NK-cells cytotoxicity. Mechanistically, participates in cytotoxic granule movement to the cell surface and perforin trafficking to the lytic granule. In addition, protects NK-cells from degranulation-associated damage induced by their own cytotoxic granule content. Presents carbohydrate ligands to selectins. The sequence is that of Lysosome-associated membrane glycoprotein 1 (LAMP1) from Bos taurus (Bovine).